A 486-amino-acid polypeptide reads, in one-letter code: Acetyl-coenzyme A carboxylase carboxyl transferase subunit beta, chloroplastic (486 aa).

The 263-residue stretch at 224–486 (LWVQCENCYG…FQFHGFFPRP (263 aa)) folds into the CoA carboxyltransferase N-terminal domain. Zn(2+) contacts are provided by Cys-228, Cys-231, Cys-247, and Cys-250. The C4-type zinc finger occupies 228 to 250 (CENCYGLNYKKFFSSKMNICEQC).

This sequence belongs to the AccD/PCCB family. As to quaternary structure, acetyl-CoA carboxylase is a heterohexamer composed of biotin carboxyl carrier protein, biotin carboxylase and 2 subunits each of ACCase subunit alpha and ACCase plastid-coded subunit beta (accD). Zn(2+) serves as cofactor.

Its subcellular location is the plastid. It is found in the chloroplast stroma. The enzyme catalyses N(6)-carboxybiotinyl-L-lysyl-[protein] + acetyl-CoA = N(6)-biotinyl-L-lysyl-[protein] + malonyl-CoA. The protein operates within lipid metabolism; malonyl-CoA biosynthesis; malonyl-CoA from acetyl-CoA: step 1/1. In terms of biological role, component of the acetyl coenzyme A carboxylase (ACC) complex. Biotin carboxylase (BC) catalyzes the carboxylation of biotin on its carrier protein (BCCP) and then the CO(2) group is transferred by the transcarboxylase to acetyl-CoA to form malonyl-CoA. In Nymphaea alba (White water-lily), this protein is Acetyl-coenzyme A carboxylase carboxyl transferase subunit beta, chloroplastic.